The sequence spans 252 residues: Triosephosphate isomerase (252 aa).

10–12 (NWK) lines the substrate pocket. Catalysis depends on His96, which acts as the Electrophile. Glu168 acts as the Proton acceptor in catalysis. Residues Gly174, Ser214, and 235 to 236 (GG) each bind substrate.

Belongs to the triosephosphate isomerase family. As to quaternary structure, homodimer.

The protein resides in the cytoplasm. It catalyses the reaction D-glyceraldehyde 3-phosphate = dihydroxyacetone phosphate. It participates in carbohydrate biosynthesis; gluconeogenesis. Its pathway is carbohydrate degradation; glycolysis; D-glyceraldehyde 3-phosphate from glycerone phosphate: step 1/1. In terms of biological role, involved in the gluconeogenesis. Catalyzes stereospecifically the conversion of dihydroxyacetone phosphate (DHAP) to D-glyceraldehyde-3-phosphate (G3P). The protein is Triosephosphate isomerase of Streptococcus pyogenes serotype M6 (strain ATCC BAA-946 / MGAS10394).